A 349-amino-acid chain; its full sequence is Anthranilate phosphoribosyltransferase (349 aa).

5-phospho-alpha-D-ribose 1-diphosphate-binding positions include glycine 82, 85–86 (GD), 92–95 (NVST), 110–118 (KHGNRAVSG), and serine 122. Residue glycine 82 participates in anthranilate binding. A Mg(2+)-binding site is contributed by serine 94. Asparagine 113 contacts anthranilate. Arginine 168 lines the anthranilate pocket. Residues aspartate 227 and glutamate 228 each contribute to the Mg(2+) site.

This sequence belongs to the anthranilate phosphoribosyltransferase family. In terms of assembly, homodimer. Mg(2+) is required as a cofactor.

It carries out the reaction N-(5-phospho-beta-D-ribosyl)anthranilate + diphosphate = 5-phospho-alpha-D-ribose 1-diphosphate + anthranilate. It functions in the pathway amino-acid biosynthesis; L-tryptophan biosynthesis; L-tryptophan from chorismate: step 2/5. In terms of biological role, catalyzes the transfer of the phosphoribosyl group of 5-phosphorylribose-1-pyrophosphate (PRPP) to anthranilate to yield N-(5'-phosphoribosyl)-anthranilate (PRA). This chain is Anthranilate phosphoribosyltransferase, found in Pseudomonas putida (strain ATCC 47054 / DSM 6125 / CFBP 8728 / NCIMB 11950 / KT2440).